Reading from the N-terminus, the 120-residue chain is Photosystem II extrinsic protein U (120 aa).

Residues 1 to 29 (MKRLLSLLTGVLVMTGLLMALIFPQSAYA) form the signal peptide.

Belongs to the PsbU family. PSII is composed of 1 copy each of membrane proteins PsbA, PsbB, PsbC, PsbD, PsbE, PsbF, PsbH, PsbI, PsbJ, PsbK, PsbL, PsbM, PsbT, PsbX, PsbY, Psb30/Ycf12, peripheral proteins PsbO, CyanoQ (PsbQ), PsbU, PsbV and a large number of cofactors. It forms dimeric complexes.

The protein localises to the cellular thylakoid membrane. Its function is as follows. One of the extrinsic, lumenal subunits of photosystem II (PSII). PSII is a light-driven water plastoquinone oxidoreductase, using light energy to abstract electrons from H(2)O, generating a proton gradient subsequently used for ATP formation. The extrinsic proteins stabilize the structure of photosystem II oxygen-evolving complex (OEC), the ion environment of oxygen evolution and protect the OEC against heat-induced inactivation. The protein is Photosystem II extrinsic protein U of Prochlorococcus marinus (strain MIT 9313).